The sequence spans 361 residues: Methyltransferase LUC1 (361 aa).

Residues Y18, N66, D89, S126, and F127 each contribute to the S-adenosyl-L-homocysteine site. Q156 and F233 together coordinate Mg(2+).

Belongs to the methyltransferase superfamily. Type-7 methyltransferase family. The cofactor is Mg(2+).

The protein operates within mycotoxin biosynthesis. In terms of biological role, methyltransferase; part of the gene cluster that mediates the biosynthesis of the mycotoxin lucilactaene and the lucilactaene-related compound NG-391 that act as cell cycle inhibitors with potent growth inhibitory activity against malarial parasites, moderate growth inhibitory activity against cancer cells, and no activity against bacteria and fungi. LUC1 performs the last step of the pathway and methylates the hydroxyl group of demethyllucilactaene at C-21 to yeald lucilactaene. The pathway begins with the hybrid PKS-NRPS synthetase LUC5 which is responsible for the condensation of one acetyl-coenzyme A (CoA) unit with six malonyl-CoA units and the amide linkage of the arising heptaketide and homoserine, subsequently releasing the first intermediate prelucilactaene B. Both the cytochrome P450 monooxygenase LUC2 and the hydrolase LUC6 function in parallel in modification of prelucilactaene B. LUC6 may catalyze the 2-pyrrolidone ring formation to form prelucilactaene C from prelucilactaene B, followed by C-15 hydroxylation by the same enzyme to give prelucilactaene D, which is then converted to prelucilactaene E by epoxidation, and finally to prelucilactaene F by cyclization. Prelucilactane D, prelucilactaene E, and prelucilactaene F can be converted to dihydrolucilactaene, NG391, and lucilactaene, respectively, via C-20 methyl group hydroxylation by the cytochrome P450 monooxygenase LUC2. However, LUC2, unlike FUS8 in fusarin C biosynthesis, is not enough for the full oxidation of the C-20 methyl group into carboxylic acid, which is a prerequisite for the final methylation step. The aldehyde dehydrogenase LUC3 is involved in the biosynthesis by further oxidation of the C-20 alcoholic analog prelucilactaene G into a carboxylic derivative. This unidentified carboxylic derivative may be converted to demethyllucilactaene. As the last step, the methyltransferase LUC1 methylates the hydroxyl group at C-21 of demethyllucilactaene to generate lucilactaene. In Fusarium sp, this protein is Methyltransferase LUC1.